Reading from the N-terminus, the 332-residue chain is Putative ankyrin repeat protein R896 (332 aa).

ANK repeat units follow at residues 159–188, 190–218, 219–248, 249–278, and 280–308; these read GNDN…NVKS, DNCA…NVKA, DGNY…DIKA, AQNL…NIST, and NDYV…DIFS.

This chain is Putative ankyrin repeat protein R896, found in Acanthamoeba polyphaga mimivirus (APMV).